The primary structure comprises 1465 residues: DNA polymerase III PolC-type (1465 aa).

The region spanning 427–583 is the Exonuclease domain; sequence YVVFDVETTG…YDAEATGRLL (157 aa).

This sequence belongs to the DNA polymerase type-C family. PolC subfamily.

It localises to the cytoplasm. The enzyme catalyses DNA(n) + a 2'-deoxyribonucleoside 5'-triphosphate = DNA(n+1) + diphosphate. Required for replicative DNA synthesis. This DNA polymerase also exhibits 3' to 5' exonuclease activity. This chain is DNA polymerase III PolC-type, found in Streptococcus pyogenes serotype M2 (strain MGAS10270).